The chain runs to 235 residues: Sugar fermentation stimulation protein homolog (235 aa).

The protein belongs to the SfsA family.

This Roseobacter denitrificans (strain ATCC 33942 / OCh 114) (Erythrobacter sp. (strain OCh 114)) protein is Sugar fermentation stimulation protein homolog.